The sequence spans 240 residues: Orotidine 5'-phosphate decarboxylase (240 aa).

Substrate-binding positions include aspartate 12, lysine 34, 62 to 71 (DMKLFDIGNT), threonine 117, arginine 180, glutamine 189, glycine 209, and arginine 210. Catalysis depends on lysine 64, which acts as the Proton donor.

This sequence belongs to the OMP decarboxylase family. Type 1 subfamily. As to quaternary structure, homodimer.

It catalyses the reaction orotidine 5'-phosphate + H(+) = UMP + CO2. Its pathway is pyrimidine metabolism; UMP biosynthesis via de novo pathway; UMP from orotate: step 2/2. Catalyzes the decarboxylation of orotidine 5'-monophosphate (OMP) to uridine 5'-monophosphate (UMP). This is Orotidine 5'-phosphate decarboxylase from Ruegeria pomeroyi (strain ATCC 700808 / DSM 15171 / DSS-3) (Silicibacter pomeroyi).